Reading from the N-terminus, the 333-residue chain is 4-hydroxy-3-methylbut-2-enyl diphosphate reductase (333 aa).

Position 34 (C34) interacts with [4Fe-4S] cluster. (2E)-4-hydroxy-3-methylbut-2-enyl diphosphate-binding residues include H63 and H96. H63 and H96 together coordinate dimethylallyl diphosphate. Residues H63 and H96 each contribute to the isopentenyl diphosphate site. C118 is a binding site for [4Fe-4S] cluster. H146 serves as a coordination point for (2E)-4-hydroxy-3-methylbut-2-enyl diphosphate. H146 contacts dimethylallyl diphosphate. H146 contacts isopentenyl diphosphate. E148 (proton donor) is an active-site residue. T186 serves as a coordination point for (2E)-4-hydroxy-3-methylbut-2-enyl diphosphate. C216 contacts [4Fe-4S] cluster. S244, S245, N246, and S289 together coordinate (2E)-4-hydroxy-3-methylbut-2-enyl diphosphate. The dimethylallyl diphosphate site is built by S244, S245, N246, and S289. 4 residues coordinate isopentenyl diphosphate: S244, S245, N246, and S289.

This sequence belongs to the IspH family. It depends on [4Fe-4S] cluster as a cofactor.

The catalysed reaction is isopentenyl diphosphate + 2 oxidized [2Fe-2S]-[ferredoxin] + H2O = (2E)-4-hydroxy-3-methylbut-2-enyl diphosphate + 2 reduced [2Fe-2S]-[ferredoxin] + 2 H(+). It catalyses the reaction dimethylallyl diphosphate + 2 oxidized [2Fe-2S]-[ferredoxin] + H2O = (2E)-4-hydroxy-3-methylbut-2-enyl diphosphate + 2 reduced [2Fe-2S]-[ferredoxin] + 2 H(+). Its pathway is isoprenoid biosynthesis; dimethylallyl diphosphate biosynthesis; dimethylallyl diphosphate from (2E)-4-hydroxy-3-methylbutenyl diphosphate: step 1/1. It participates in isoprenoid biosynthesis; isopentenyl diphosphate biosynthesis via DXP pathway; isopentenyl diphosphate from 1-deoxy-D-xylulose 5-phosphate: step 6/6. Its function is as follows. Catalyzes the conversion of 1-hydroxy-2-methyl-2-(E)-butenyl 4-diphosphate (HMBPP) into a mixture of isopentenyl diphosphate (IPP) and dimethylallyl diphosphate (DMAPP). Acts in the terminal step of the DOXP/MEP pathway for isoprenoid precursor biosynthesis. The sequence is that of 4-hydroxy-3-methylbut-2-enyl diphosphate reductase from Mycolicibacterium gilvum (strain PYR-GCK) (Mycobacterium gilvum (strain PYR-GCK)).